Consider the following 604-residue polypeptide: Glutamine--fructose-6-phosphate aminotransferase [isomerizing] (604 aa).

Cys2 (nucleophile; for GATase activity) is an active-site residue. A Glutamine amidotransferase type-2 domain is found at 2 to 216; the sequence is CGIVGYVGFR…DGDVVRLTRE (215 aa). SIS domains are found at residues 281-420 and 453-594; these read LALD…ARGA and VAEK…VDQP. Lys599 acts as the For Fru-6P isomerization activity in catalysis.

As to quaternary structure, homodimer.

It localises to the cytoplasm. It catalyses the reaction D-fructose 6-phosphate + L-glutamine = D-glucosamine 6-phosphate + L-glutamate. Catalyzes the first step in hexosamine metabolism, converting fructose-6P into glucosamine-6P using glutamine as a nitrogen source. This is Glutamine--fructose-6-phosphate aminotransferase [isomerizing] from Thermus thermophilus (strain ATCC BAA-163 / DSM 7039 / HB27).